We begin with the raw amino-acid sequence, 419 residues long: Gamma-glutamyl phosphate reductase (419 aa).

The protein belongs to the gamma-glutamyl phosphate reductase family.

Its subcellular location is the cytoplasm. The enzyme catalyses L-glutamate 5-semialdehyde + phosphate + NADP(+) = L-glutamyl 5-phosphate + NADPH + H(+). The protein operates within amino-acid biosynthesis; L-proline biosynthesis; L-glutamate 5-semialdehyde from L-glutamate: step 2/2. Catalyzes the NADPH-dependent reduction of L-glutamate 5-phosphate into L-glutamate 5-semialdehyde and phosphate. The product spontaneously undergoes cyclization to form 1-pyrroline-5-carboxylate. The protein is Gamma-glutamyl phosphate reductase of Maridesulfovibrio salexigens (strain ATCC 14822 / DSM 2638 / NCIMB 8403 / VKM B-1763) (Desulfovibrio salexigens).